The sequence spans 353 residues: Iron(III) enterobactin esterase (353 aa).

Belongs to the Fes family.

The protein localises to the cytoplasm. It carries out the reaction Fe(III)-enterobactin + 3 H2O + H(+) = Fe(III)-[N-(2,3-dihydroxybenzoyl)-L-serine] + 2 N-(2,3-dihydroxybenzoyl)-L-serine. It catalyses the reaction Fe(III)-enterobactin + H2O = Fe(III)-[N-(2,3-dihydroxybenzoyl)-L-serine]3 + H(+). The enzyme catalyses Fe(III)-[N-(2,3-dihydroxybenzoyl)-L-serine]3 + H2O + H(+) = Fe(III)-[N-(2,3-dihydroxybenzoyl)-L-serine]2 + N-(2,3-dihydroxybenzoyl)-L-serine. The catalysed reaction is Fe(III)-[N-(2,3-dihydroxybenzoyl)-L-serine]2 + H2O + H(+) = Fe(III)-[N-(2,3-dihydroxybenzoyl)-L-serine] + N-(2,3-dihydroxybenzoyl)-L-serine. Its function is as follows. Catalyzes the hydrolysis of ferric enterobactin (Fe-Ent). Is responsible for the release of iron from ferric enterobactin. This is Iron(III) enterobactin esterase from Yersinia enterocolitica.